Reading from the N-terminus, the 537-residue chain is Lysine--tRNA ligase (537 aa).

The 'HIGH' region signature appears at 30-38 (PSGNIHIGN). Positions 276–280 (AMSSS) match the 'KMSKS' region motif.

This sequence belongs to the class-I aminoacyl-tRNA synthetase family.

It localises to the cytoplasm. The catalysed reaction is tRNA(Lys) + L-lysine + ATP = L-lysyl-tRNA(Lys) + AMP + diphosphate. The polypeptide is Lysine--tRNA ligase (Methanosarcina barkeri).